We begin with the raw amino-acid sequence, 474 residues long: tRNA-2-methylthio-N(6)-dimethylallyladenosine synthase (474 aa).

In terms of domain architecture, MTTase N-terminal spans 3-120; it reads KKLHIKTWGC…LPEMINSVRG (118 aa). 6 residues coordinate [4Fe-4S] cluster: Cys12, Cys49, Cys83, Cys157, Cys161, and Cys164. The Radical SAM core domain maps to 143–375; the sequence is RAEGPTAFVS…QERINQQAMA (233 aa). A TRAM domain is found at 378–441; that stretch reads RRMLGTTQRI…PNSLRGKVVR (64 aa).

It belongs to the methylthiotransferase family. MiaB subfamily. As to quaternary structure, monomer. [4Fe-4S] cluster is required as a cofactor.

Its subcellular location is the cytoplasm. The enzyme catalyses N(6)-dimethylallyladenosine(37) in tRNA + (sulfur carrier)-SH + AH2 + 2 S-adenosyl-L-methionine = 2-methylsulfanyl-N(6)-dimethylallyladenosine(37) in tRNA + (sulfur carrier)-H + 5'-deoxyadenosine + L-methionine + A + S-adenosyl-L-homocysteine + 2 H(+). The catalysed reaction is N(6)-dimethylallyladenosine(37) in tRNA + (sulfur carrier)-SH + AH2 + S-adenosyl-L-methionine = 2-thio-N(6)-dimethylallyladenosine(37) in tRNA + (sulfur carrier)-H + 5'-deoxyadenosine + L-methionine + A + H(+). It carries out the reaction 2-thio-N(6)-dimethylallyladenosine(37) in tRNA + S-adenosyl-L-methionine = 2-methylsulfanyl-N(6)-dimethylallyladenosine(37) in tRNA + S-adenosyl-L-homocysteine + H(+). Functionally, catalyzes the methylthiolation of N6-(dimethylallyl)adenosine (i(6)A), leading to the formation of 2-methylthio-N6-(dimethylallyl)adenosine (ms(2)i(6)A) at position 37 in tRNAs that read codons beginning with uridine. This chain is tRNA-2-methylthio-N(6)-dimethylallyladenosine synthase, found in Salmonella typhimurium (strain LT2 / SGSC1412 / ATCC 700720).